We begin with the raw amino-acid sequence, 803 residues long: Nuclear factor of activated T-cells, cytoplasmic 1 (803 aa).

The interval Pro-101–Thr-106 is calcineurin-binding. The tract at residues Leu-109–Glu-199 is transactivation domain A (TAD-A). Over residues Pro-181–Thr-195 the composition is skewed to polar residues. A disordered region spans residues Pro-181 to Asp-279. Repeat copies occupy residues Ser-184–Glu-200 and Ser-214–Glu-230. The tract at residues Ser-184–Asp-279 is 3 X SP repeats. Phosphoserine occurs at positions 214 and 218. Low complexity predominate over residues Ser-214 to Ser-231. Ser-226 is subject to Phosphoserine; by PKA. Positions Lys-246–Lys-248 match the Nuclear localization signal motif. Repeat unit 3 spans residues Ser-263–Asp-279. Phosphoserine; by PKA is present on Ser-275. Positions Ser-291–Thr-302 match the Nuclear export signal motif. Residues Pro-389 to Ala-571 enclose the RHD domain. A DNA-binding region spans residues Arg-418 to Gly-425. The short motif at Lys-661–Lys-663 is the Nuclear localization signal element. The disordered stretch occupies residues Leu-723–Gly-803. The segment covering Ser-778–Leu-792 has biased composition (pro residues). A compositionally biased stretch (low complexity) spans Leu-793–Gly-803.

As to quaternary structure, member of the multicomponent NFATC transcription complex that consists of at least two components, a pre-existing cytoplasmic component NFATC2 and an inducible nuclear component NFATC1. Other members such as NFATC4, NFATC3 or members of the activating protein-1 family, MAF, GATA4 and Cbp/p300 can also bind the complex. NFATC proteins bind to DNA as monomers. Interacts with HOMER2 and HOMER3; this interaction may compete with calcineurin/PPP3CA-binding and hence prevent NFATC1 dephosphorylation and activation. Interacts with TLE6/GRG6. Post-translationally, phosphorylated by NFATC-kinase and GSK3B; phosphorylation induces NFATC1 nuclear exit and dephosphorylation by calcineurin promotes nuclear import. Phosphorylation by PKA and DYRK2 negatively modulates nuclear accumulation, and promotes subsequent phosphorylation by GSK3B or casein kinase 1.

It is found in the cytoplasm. The protein localises to the nucleus. Functionally, plays a role in the inducible expression of cytokine genes in T-cells, especially in the induction of the IL-2 or IL-4 gene transcription. Also controls gene expression in embryonic cardiac cells. Could regulate not only the activation and proliferation but also the differentiation and programmed death of T-lymphocytes as well as lymphoid and non-lymphoid cells. Required for osteoclastogenesis and regulates many genes important for osteoclast differentiation and function. The sequence is that of Nuclear factor of activated T-cells, cytoplasmic 1 from Bos taurus (Bovine).